The primary structure comprises 557 residues: Urocanate hydratase (557 aa).

NAD(+) is bound by residues 53–54 (GG), glutamine 131, 177–179 (GMG), glutamate 197, 243–244 (NA), 264–268 (QTSAH), 274–275 (YL), and tyrosine 323. Residue cysteine 411 is part of the active site. Glycine 493 serves as a coordination point for NAD(+).

It belongs to the urocanase family. The cofactor is NAD(+).

It is found in the cytoplasm. The catalysed reaction is 4-imidazolone-5-propanoate = trans-urocanate + H2O. Its pathway is amino-acid degradation; L-histidine degradation into L-glutamate; N-formimidoyl-L-glutamate from L-histidine: step 2/3. In terms of biological role, catalyzes the conversion of urocanate to 4-imidazolone-5-propionate. In Mesorhizobium japonicum (strain LMG 29417 / CECT 9101 / MAFF 303099) (Mesorhizobium loti (strain MAFF 303099)), this protein is Urocanate hydratase.